Consider the following 33-residue polypeptide: Brevinin-2PTd (33 aa).

Cys-27 and Cys-33 are oxidised to a cystine.

In terms of tissue distribution, expressed by the skin glands.

It localises to the secreted. Functionally, has antibacterial activity against the Gram-positive bacterium S.aureus ATCC 25923 and the Gram-negative bacterium E.coli ATCC 25726. This is Brevinin-2PTd from Pulchrana picturata (Malaysian fire frog).